Consider the following 214-residue polypeptide: Adenylate kinase (214 aa).

Residue 12 to 17 (GVGKGT) participates in ATP binding. Residues 32 to 61 (STGNIFRSQIASNSELGIKLKEIVESGGYV) are NMP. AMP is bound by residues Thr-33, Arg-38, 59 to 61 (GYV), 88 to 91 (GYPR), and Gln-95. The tract at residues 126 to 163 (GRRICPSCNAQYHIYFKKSKLDTKCEIDQSELIQRKDD) is LID. Arg-127 lines the ATP pocket. Zn(2+) is bound by residues Cys-130, Cys-133, Cys-150, and Asp-153. 2 residues coordinate AMP: Arg-160 and Arg-171. Lys-199 is a binding site for ATP.

This sequence belongs to the adenylate kinase family. In terms of assembly, monomer.

It is found in the cytoplasm. The catalysed reaction is AMP + ATP = 2 ADP. Its pathway is purine metabolism; AMP biosynthesis via salvage pathway; AMP from ADP: step 1/1. In terms of biological role, catalyzes the reversible transfer of the terminal phosphate group between ATP and AMP. Plays an important role in cellular energy homeostasis and in adenine nucleotide metabolism. This Mycoplasmopsis pulmonis (strain UAB CTIP) (Mycoplasma pulmonis) protein is Adenylate kinase.